A 473-amino-acid polypeptide reads, in one-letter code: Glutamate--tRNA ligase 2 (473 aa).

Positions 11–21 match the 'HIGH' region motif; that stretch reads PSPTGYLHIGG. The segment covering 113 to 133 has biased composition (basic and acidic residues); sequence KARAEGRPPRYDGRWRDRDPS. A disordered region spans residues 113-136; sequence KARAEGRPPRYDGRWRDRDPSEAP. The 'KMSKS' region motif lies at 240–244; that stretch reads KLSKR. Residue Lys243 participates in ATP binding.

The protein belongs to the class-I aminoacyl-tRNA synthetase family. Glutamate--tRNA ligase type 1 subfamily. Monomer.

Its subcellular location is the cytoplasm. The enzyme catalyses tRNA(Glu) + L-glutamate + ATP = L-glutamyl-tRNA(Glu) + AMP + diphosphate. Functionally, catalyzes the attachment of glutamate to tRNA(Glu) in a two-step reaction: glutamate is first activated by ATP to form Glu-AMP and then transferred to the acceptor end of tRNA(Glu). This is Glutamate--tRNA ligase 2 from Brucella canis (strain ATCC 23365 / NCTC 10854 / RM-666).